A 292-amino-acid polypeptide reads, in one-letter code: Transmembrane and ubiquitin-like domain-containing protein 1 (292 aa).

The chain crosses the membrane as a helical span at residues 11–31; the sequence is VTLLFGVVFLVLVLVLAWAST. A disordered region spans residues 34 to 143; sequence VEPPEHLLSP…TQPSAEDAAS (110 aa). Residues 71-80 are compositionally biased toward basic and acidic residues; that stretch reads VRDEDDKSEP. The span at 84 to 94 shows a compositional bias: low complexity; the sequence is AGAAGQSADGS. The Ubiquitin-like domain occupies 149–222; it reads MVLRLKFLND…LHCHISQHAT (74 aa). 2 helical membrane passes run 237 to 257 and 269 to 289; these read VALN…SVLW and APAT…AFGV.

Its subcellular location is the membrane. The protein resides in the cytoplasm. It localises to the nucleus. May contribute to the regulation of translation during cell-cycle progression. May contribute to the regulation of cell proliferation. The membrane form is involved in sterol-regulated ubiquitination and degradation of HMG-CoA reductase HMGCR. May be involved in centrosome assembly. The protein is Transmembrane and ubiquitin-like domain-containing protein 1 (tmub1) of Danio rerio (Zebrafish).